The following is a 93-amino-acid chain: Small ribosomal subunit protein bS20 (93 aa).

It belongs to the bacterial ribosomal protein bS20 family.

Its function is as follows. Binds directly to 16S ribosomal RNA. This Dictyoglomus thermophilum (strain ATCC 35947 / DSM 3960 / H-6-12) protein is Small ribosomal subunit protein bS20.